The primary structure comprises 250 residues: Acetoacetate decarboxylase 1 (250 aa).

Lys120 functions as the Schiff-base intermediate with acetoacetate in the catalytic mechanism.

This sequence belongs to the ADC family.

The catalysed reaction is acetoacetate + H(+) = acetone + CO2. In terms of biological role, catalyzes the conversion of acetoacetate to acetone and carbon dioxide. The polypeptide is Acetoacetate decarboxylase 1 (Bradyrhizobium diazoefficiens (strain JCM 10833 / BCRC 13528 / IAM 13628 / NBRC 14792 / USDA 110)).